The sequence spans 887 residues: Alanine--tRNA ligase (887 aa).

Positions 575, 579, 677, and 681 each coordinate Zn(2+).

The protein belongs to the class-II aminoacyl-tRNA synthetase family. It depends on Zn(2+) as a cofactor.

It localises to the cytoplasm. The enzyme catalyses tRNA(Ala) + L-alanine + ATP = L-alanyl-tRNA(Ala) + AMP + diphosphate. In terms of biological role, catalyzes the attachment of alanine to tRNA(Ala) in a two-step reaction: alanine is first activated by ATP to form Ala-AMP and then transferred to the acceptor end of tRNA(Ala). Also edits incorrectly charged Ser-tRNA(Ala) and Gly-tRNA(Ala) via its editing domain. The sequence is that of Alanine--tRNA ligase from Geobacillus kaustophilus (strain HTA426).